We begin with the raw amino-acid sequence, 527 residues long: Monooxygenase aurF (527 aa).

Residues 1–19 form the signal peptide; it reads MPNPTVAIVGLGALGLVTL. N59 carries an N-linked (GlcNAc...) asparagine glycan.

This sequence belongs to the FMO family. In terms of assembly, might be part of an extracellular enzyme complex composed of GIP1, aurF, aurO and aurS. FAD is required as a cofactor.

The protein localises to the secreted. The protein resides in the extracellular space. It participates in pigment biosynthesis. Functionally, monooxygenase; part of the gene cluster that mediates the biosynthesis of aurofusarin, a red mycelium pigment which is acting as a mycotoxin. The first step is performed by the polyketide synthase which condenses one acetyl-CoA and 6 malonyl-CoA units to form the first intermediate, the cyclic heptaketide and yellow pigment YWA1. The C2 hydroxyl group in the pyrone ring of YWA1 is probably formed during ring closure by an aldol-type cyclization reaction. The dehydratase aurZ then acts as the first tailoring enzyme in the aurofusarin biosynthetic pathway by converting YWA1 to nor-rubrofusarin. Nor-rubrofusarin is then methylated to rubrofusarin by the O-methyltransferase aurJ. Rubrofusarin is then transported across the plasma membrane by the rubrofusarin-specific pump aurT for further enzymatic processing by the extracellular complex composed of GIP1, aurF, aurO and aurS to yield aurofusarin. This Gibberella zeae (strain ATCC MYA-4620 / CBS 123657 / FGSC 9075 / NRRL 31084 / PH-1) (Wheat head blight fungus) protein is Monooxygenase aurF.